The primary structure comprises 633 residues: Membrane protein insertase YidC (633 aa).

6 consecutive transmembrane segments (helical) span residues 3 to 23 (KNTL…SWFN), 377 to 397 (FIHN…IILF), 453 to 473 (LPML…PSAI), 499 to 519 (IPII…LMTI), 541 to 561 (GMKA…NQYA), and 562 to 582 (SGLT…TLIF). Residues 612–633 (LEEAQRAQQETLRKQQEAKKKR) form a disordered region.

This sequence belongs to the OXA1/ALB3/YidC family. Type 1 subfamily. In terms of assembly, interacts with the Sec translocase complex via SecD. Specifically interacts with transmembrane segments of nascent integral membrane proteins during membrane integration.

The protein localises to the cell inner membrane. In terms of biological role, required for the insertion and/or proper folding and/or complex formation of integral membrane proteins into the membrane. Involved in integration of membrane proteins that insert both dependently and independently of the Sec translocase complex, as well as at least some lipoproteins. Aids folding of multispanning membrane proteins. The polypeptide is Membrane protein insertase YidC (Parabacteroides distasonis (strain ATCC 8503 / DSM 20701 / CIP 104284 / JCM 5825 / NCTC 11152)).